A 214-amino-acid polypeptide reads, in one-letter code: Probable maleylacetoacetate isomerase (214 aa).

Positions 4-84 (QKPVLYSYWR…YLEETHPDVP (81 aa)) constitute a GST N-terminal domain. Residues 14–19 (SSCSWR), valine 56, 68–69 (ES), glutamine 108, and 112–114 (NLK) contribute to the glutathione site. A GST C-terminal domain is found at 89–212 (DPIKRAHARA…HPDNQPDTGL (124 aa)).

The protein belongs to the GST superfamily. Zeta family. The cofactor is glutathione.

It localises to the cytoplasm. The catalysed reaction is 4-maleylacetoacetate = 4-fumarylacetoacetate. It functions in the pathway amino-acid degradation; L-phenylalanine degradation; acetoacetate and fumarate from L-phenylalanine: step 5/6. This chain is Probable maleylacetoacetate isomerase (gst-42), found in Caenorhabditis elegans.